A 207-amino-acid polypeptide reads, in one-letter code: Guanylate kinase (207 aa).

Residues Gly-17–Val-197 enclose the Guanylate kinase-like domain. Gly-24–Ser-31 serves as a coordination point for ATP.

It belongs to the guanylate kinase family.

It localises to the cytoplasm. It catalyses the reaction GMP + ATP = GDP + ADP. In terms of biological role, essential for recycling GMP and indirectly, cGMP. The protein is Guanylate kinase of Rhodococcus jostii (strain RHA1).